The sequence spans 119 residues: Large ribosomal subunit protein bL20 (119 aa).

Belongs to the bacterial ribosomal protein bL20 family.

Its function is as follows. Binds directly to 23S ribosomal RNA and is necessary for the in vitro assembly process of the 50S ribosomal subunit. It is not involved in the protein synthesizing functions of that subunit. This Shouchella clausii (strain KSM-K16) (Alkalihalobacillus clausii) protein is Large ribosomal subunit protein bL20.